A 463-amino-acid polypeptide reads, in one-letter code: NADH dehydrogenase [ubiquinone] iron-sulfur protein 2, mitochondrial (463 aa).

Residues 1–33 (MAALRALCRLRGAAAQVLRPGAGVRLPIQPSRG) constitute a mitochondrion transit peptide. K62 is subject to N6-acetyllysine. Residue R118 is modified to Symmetric dimethylarginine. [4Fe-4S] cluster is bound by residues C326, C332, and C347.

The protein belongs to the complex I 49 kDa subunit family. In terms of assembly, core subunit of respiratory chain NADH dehydrogenase (Complex I) which is composed of 45 different subunits. Component of the iron-sulfur (IP) fragment of the enzyme. Interacts with NDUFAF3. Interacts with NDUFAF7. Interacts with CERS2. Requires [4Fe-4S] cluster as cofactor. Post-translationally, dimethylation at Arg-118 by NDUFAF7 takes place after NDUFS2 assembles into the complex I, leading to stabilize the early intermediate complex.

The protein resides in the mitochondrion inner membrane. It carries out the reaction a ubiquinone + NADH + 5 H(+)(in) = a ubiquinol + NAD(+) + 4 H(+)(out). In terms of biological role, core subunit of the mitochondrial membrane respiratory chain NADH dehydrogenase (Complex I) which catalyzes electron transfer from NADH through the respiratory chain, using ubiquinone as an electron acceptor. Essential for the catalytic activity and assembly of complex I. Redox-sensitive, critical component of the oxygen-sensing pathway in the pulmonary vasculature which plays a key role in acute pulmonary oxygen-sensing and hypoxic pulmonary vasoconstriction. Plays an important role in carotid body sensing of hypoxia. Essential for glia-like neural stem and progenitor cell proliferation, differentiation and subsequent oligodendrocyte or neuronal maturation. This Bos taurus (Bovine) protein is NADH dehydrogenase [ubiquinone] iron-sulfur protein 2, mitochondrial (NDUFS2).